The following is a 154-amino-acid chain: Large-conductance mechanosensitive channel (154 aa).

2 helical membrane-spanning segments follow: residues 14 to 34 (VVDLAVGIVIGAAFGAIVNSL) and 86 to 106 (VFINALINFLILAMAIFFFVV).

It belongs to the MscL family. Homopentamer.

It localises to the cell membrane. Functionally, channel that opens in response to stretch forces in the membrane lipid bilayer. May participate in the regulation of osmotic pressure changes within the cell. The chain is Large-conductance mechanosensitive channel from Dehalococcoides mccartyi (strain ATCC BAA-2100 / JCM 16839 / KCTC 5957 / BAV1).